The chain runs to 2944 residues: Collagen alpha-1(VII) chain (2944 aa).

The first 16 residues, 1–16 (MTLRLLVAALCAGILA), serve as a signal peptide directing secretion. Residues 17–1253 (EAPRVRAQHR…PEPCPVYCPK (1237 aa)) are nonhelical region (NC1). The region spanning 38 to 211 (DIVFLLDGSS…SILRTLLPLV (174 aa)) is the VWFA 1 domain. Fibronectin type-III domains lie at 234–329 (APRD…TALE), 330–416 (GPEL…TDAS), 417–507 (VEQT…PELP), 510–597 (PVTD…EPET), 600–687 (AVPG…DPLG), 688–775 (PVRT…APEP), 778–866 (RVSR…PPEA), 869–957 (ALGT…SPRV), and 958–1051 (PSIE…CPRG). A glycan (N-linked (GlcNAc...) asparagine) is linked at N337. The disordered stretch occupies residues 632 to 651 (STGSGPESSQTLPPDSTATD). Residue N786 is glycosylated (N-linked (GlcNAc...) asparagine). The 176-residue stretch at 1054 to 1229 (DVVFLPHATQ…PSLDQAVSGL (176 aa)) folds into the VWFA 2 domain. N1109 carries an N-linked (GlcNAc...) asparagine glycan. 2 short sequence motifs (cell attachment site) span residues 1170–1172 (RGD) and 1334–1336 (RGD). Disordered stretches follow at residues 1239–1941 (TTQP…SVPN), 1963–2782 (WDES…EKGE), and 2837–2872 (SHAE…PWDS). Residues 1254 to 1477 (GQKGEPGEMG…GPRGPPGAIG (224 aa)) form an interrupted collagenous region region. The interval 1254 to 2784 (GQKGEPGEMG…GPRGEKGEAA (1531 aa)) is triple-helical region. Over residues 1336-1346 (DPGERGPRGPK) the composition is skewed to basic and acidic residues. Residues 1355 to 1365 (VIGGEGPGLPG) are compositionally biased toward gly residues. The span at 1399–1408 (KGDKGDRGER) shows a compositional bias: basic and acidic residues. Residues 1429–1440 (PGSPGPQGPVGP) show a composition bias toward pro residues. Positions 1574–1583 (RGPPGLVLPG) are enriched in low complexity. Basic and acidic residues-rich tracts occupy residues 1630–1642 (RGRD…KGDE), 1669–1683 (VGEK…EDGR), and 1715–1733 (AREK…RGPK). The segment covering 1786–1802 (KPGAAGPSGPNGAAGKA) has biased composition (low complexity). Residues 1852–1877 (EDGRKGEKGDSGASGREGRDGPKGER) show a composition bias toward basic and acidic residues. A compositionally biased stretch (pro residues) spans 1886-1897 (QGPPGLPGPVGP). The segment covering 1898–1911 (PGQGFPGVPGGTGP) has biased composition (gly residues). Basic and acidic residues predominate over residues 1974-1984 (PERRRGPKGDS). Positions 2008–2010 (RGD) match the Cell attachment site motif. 4-hydroxyproline occurs at positions 2036 and 2039. Positions 2046–2055 (GRAGGVGEAG) are enriched in gly residues. Basic and acidic residues predominate over residues 2056-2074 (RPGERGERGEKGERGEQGR). A compositionally biased stretch (pro residues) spans 2078 to 2092 (PGLPGTPGPPGPPGP). Residues P2084, P2087, and P2090 each carry the 4-hydroxyproline modification. Residues 2127–2143 (PKGDRGVPGIKGDRGEP) are compositionally biased toward basic and acidic residues. 4-hydroxyproline occurs at positions 2167, 2176, 2185, and 2188. 2 stretches are compositionally biased toward low complexity: residues 2191 to 2206 (PGLA…SGLK) and 2235 to 2250 (SGLV…PGQV). Residues 2328–2346 (AKGDRGLPGPRGEKGEAGR) show a composition bias toward basic and acidic residues. Over residues 2387–2406 (VKGDLGLPGLPGAPGVVGFP) the composition is skewed to low complexity. Positions 2438-2448 (PLGPPGPPGSV) are enriched in pro residues. Composition is skewed to basic and acidic residues over residues 2471–2486 (RGER…DGRP) and 2534–2570 (AKGD…EPGD). Positions 2553–2555 (RGD) match the Cell attachment site motif. Low complexity predominate over residues 2573–2601 (SAGLPGLRGLLGPQGQPGAAGIPGDPGSP). A 5-hydroxylysine; alternate mark is found at K2625 and K2631. 2 O-linked (Gal...) hydroxylysine; alternate glycosylation sites follow: K2625 and K2631. P2664, P2667, and P2673 each carry 4-hydroxyproline. Residues 2704–2713 (GTPGIGGFPG) are compositionally biased toward gly residues. Residues 2749-2762 (GERVVGAPGVPGAP) are compositionally biased toward low complexity. Residues 2785–2944 (LTEDDIRGFV…QSQGTGTAQD (160 aa)) form a nonhelical region (NC2) region. Over residues 2837–2847 (SHAEEEERVPP) the composition is skewed to basic and acidic residues. A compositionally biased stretch (acidic residues) spans 2848–2872 (EDDEYSEYSEYSVEEYQDPEAPWDS). The 73-residue stretch at 2872-2944 (SDDPCSLPLD…QSQGTGTAQD (73 aa)) folds into the BPTI/Kunitz inhibitor domain. Intrachain disulfides connect C2876/C2929, C2885/C2912, and C2904/C2925.

Homotrimer. Interacts with MIA3/TANGO1; facilitating its loading into transport carriers and subsequent secretion. Prolines at the third position of the tripeptide repeating unit (G-X-Y) are hydroxylated in some or all of the chains.

Its subcellular location is the secreted. The protein resides in the extracellular space. It is found in the extracellular matrix. The protein localises to the basement membrane. Functionally, stratified squamous epithelial basement membrane protein that forms anchoring fibrils which may contribute to epithelial basement membrane organization and adherence by interacting with extracellular matrix (ECM) proteins such as type IV collagen. The protein is Collagen alpha-1(VII) chain (COL7A1) of Homo sapiens (Human).